Here is a 124-residue protein sequence, read N- to C-terminus: Small ribosomal subunit protein uS12c (124 aa).

The protein belongs to the universal ribosomal protein uS12 family. As to quaternary structure, part of the 30S ribosomal subunit.

Its subcellular location is the plastid. The protein resides in the chloroplast. In terms of biological role, with S4 and S5 plays an important role in translational accuracy. Located at the interface of the 30S and 50S subunits. The protein is Small ribosomal subunit protein uS12c (rps12) of Oryza nivara (Indian wild rice).